The primary structure comprises 152 residues: Deoxyuridine 5'-triphosphate nucleotidohydrolase (152 aa).

Residues 72–74, asparagine 85, and 89–91 each bind substrate; these read RSG and TVD.

This sequence belongs to the dUTPase family. It depends on Mg(2+) as a cofactor.

It catalyses the reaction dUTP + H2O = dUMP + diphosphate + H(+). The protein operates within pyrimidine metabolism; dUMP biosynthesis; dUMP from dCTP (dUTP route): step 2/2. In terms of biological role, this enzyme is involved in nucleotide metabolism: it produces dUMP, the immediate precursor of thymidine nucleotides and it decreases the intracellular concentration of dUTP so that uracil cannot be incorporated into DNA. This chain is Deoxyuridine 5'-triphosphate nucleotidohydrolase, found in Nitrobacter hamburgensis (strain DSM 10229 / NCIMB 13809 / X14).